The chain runs to 390 residues: 3-ketoacyl-CoA thiolase (390 aa).

The active-site Acyl-thioester intermediate is C95. Catalysis depends on proton acceptor residues H346 and C376.

The protein belongs to the thiolase-like superfamily. Thiolase family. As to quaternary structure, heterotetramer of two alpha chains (FadB) and two beta chains (FadA).

It localises to the cytoplasm. The catalysed reaction is an acyl-CoA + acetyl-CoA = a 3-oxoacyl-CoA + CoA. It participates in lipid metabolism; fatty acid beta-oxidation. Its function is as follows. Catalyzes the final step of fatty acid oxidation in which acetyl-CoA is released and the CoA ester of a fatty acid two carbons shorter is formed. The sequence is that of 3-ketoacyl-CoA thiolase from Acinetobacter baylyi (strain ATCC 33305 / BD413 / ADP1).